A 39-amino-acid polypeptide reads, in one-letter code: Natriuretic peptide TNPc (39 aa).

The cysteines at positions 9 and 25 are disulfide-linked.

This sequence belongs to the natriuretic peptide family. Expressed by the venom gland.

The protein localises to the secreted. Functionally, snake venom natriuretic peptide that exhibits vasoactive and hypotensive activity. Produces a near complete relaxation in pre-contracted aortae by activating the natriuretic peptide receptor 1 (NPR1). Stimulates cGMP production through the natriuretic peptide receptor 1 (NPR1) with high potencies for the rat NPR1 (EC(50)=100 nM), and very weak potencies over human NPR1 (28% activation at 10 uM). In vivo, reduces both systolic and diastolic blood pressure with no effect on heart rate, when intravenously injected in conscious rabbits. Also enhances the bradycardia due to cardiac afferent stimulation (Bezold-Jarisch reflex). In Oxyuranus microlepidotus (Inland taipan), this protein is Natriuretic peptide TNPc.